Here is a 448-residue protein sequence, read N- to C-terminus: Acyl-lipid (9-3)-desaturase (448 aa).

The Cytochrome b5 heme-binding domain maps to 6–90; it reads KKYITSDELK…LKDYSVSEVS (85 aa). 2 residues coordinate heme: histidine 41 and histidine 64. The next 2 membrane-spanning stretches (helical) occupy residues 112–132 and 137–157; these read IMFATLCFIAMLFAMSVYGVL and VLVHLFSGCLMGFLWIQSGWI. The Histidine box-1 motif lies at 159-163; sequence HDAGH. A helical transmembrane segment spans residues 172 to 192; sequence LNKFMGIFAANCLSGISIGWW. Residues 196–200 carry the Histidine box-2 motif; sequence HNAHH. 3 consecutive transmembrane segments (helical) span residues 212–232, 254–274, and 286–306; these read LQYIPFLVVSSKFFGSLTSHF, FYPIMCAARLNMYVQSLIMLL, and LLGCLVFSIWYPLLVSCLPNW. The Histidine box-3 signature appears at 373 to 377; that stretch reads QIEHH.

Belongs to the fatty acid desaturase type 1 family.

The protein resides in the endoplasmic reticulum membrane. It catalyses the reaction (9Z,12Z,15Z)-octadecatrienoyl-containing glycerolipid + 2 Fe(II)-[cytochrome b5] + O2 + 2 H(+) = (6Z,9Z,12Z,15Z)-octadecatetraenoyl-containing glycerolipid + 2 Fe(III)-[cytochrome b5] + 2 H2O. It carries out the reaction a (9Z,12Z)-octadecadienoyl-containing glycerolipid + 2 Fe(II)-[cytochrome b5] + O2 + 2 H(+) = (6Z,9Z,12Z)-octadecatrienoyl-containing glycerolipid + 2 Fe(III)-[cytochrome b5] + 2 H2O. It functions in the pathway lipid metabolism; polyunsaturated fatty acid biosynthesis. In terms of biological role, fatty acid desaturase able to introduce a delta(6)-double bond into delta(9)-unsaturated fatty-acid substrates. Can use both linoleic acid (18:2(9Z,12Z)) and alpha-linolenic acid (18:3(9Z,12Z,15Z)) as substrates. This chain is Acyl-lipid (9-3)-desaturase, found in Borago officinalis (Bourrache).